A 179-amino-acid chain; its full sequence is Large ribosomal subunit protein uL6 (179 aa).

It belongs to the universal ribosomal protein uL6 family. As to quaternary structure, part of the 50S ribosomal subunit.

In terms of biological role, this protein binds to the 23S rRNA, and is important in its secondary structure. It is located near the subunit interface in the base of the L7/L12 stalk, and near the tRNA binding site of the peptidyltransferase center. The sequence is that of Large ribosomal subunit protein uL6 from Koribacter versatilis (strain Ellin345).